The following is a 120-amino-acid chain: Large ribosomal subunit protein bL12 (120 aa).

Over residues 95–112 (KEGVSKEEAEEVQGKLEE) the composition is skewed to basic and acidic residues. Residues 95–120 (KEGVSKEEAEEVQGKLEEAGASVEVK) form a disordered region.

This sequence belongs to the bacterial ribosomal protein bL12 family. As to quaternary structure, homodimer. Part of the ribosomal stalk of the 50S ribosomal subunit. Forms a multimeric L10(L12)X complex, where L10 forms an elongated spine to which 2 to 4 L12 dimers bind in a sequential fashion. Binds GTP-bound translation factors.

Functionally, forms part of the ribosomal stalk which helps the ribosome interact with GTP-bound translation factors. Is thus essential for accurate translation. The sequence is that of Large ribosomal subunit protein bL12 from Oceanobacillus iheyensis (strain DSM 14371 / CIP 107618 / JCM 11309 / KCTC 3954 / HTE831).